The chain runs to 195 residues: Probable prefoldin subunit 3 (195 aa).

It belongs to the prefoldin subunit alpha family. In terms of assembly, heterohexamer of two PFD-alpha type and four PFD-beta type subunits.

Its function is as follows. Binds specifically to cytosolic chaperonin (c-CPN) and transfers target proteins to it. Binds to nascent polypeptide chain and promotes folding in an environment in which there are many competing pathways for nonnative proteins. The polypeptide is Probable prefoldin subunit 3 (pfdn3) (Dictyostelium discoideum (Social amoeba)).